Consider the following 418-residue polypeptide: MSVNEIILDMAKAARAASREIGKCSGQVKDKVLTDIAALLKEEASFLYQENAKDLEAAKESGLSSAMIDRLTIKEATIESMAQGLVEVAAMADPVGSMVKMWQRPNGLSVGKMRIPLGVVCMIYESRPNVTIDAAGLCLKAGNAVVLRGGSEAIHSNRALGQVIAKALAKNGLPETVVQLVPMTDREAVKELLAQEEYIDLVIPRGGEGLIRFVVANSSIPVLKHYKGVCHVYVDEGADHGMAVNICQNGKVHRPGVCNAVETLLVNEAEAAAFLPKVAEVLGKDGVEFRGCPKTCAILKDAKPAQEEDWPAEFLDLILAVKVVKDMDEAMDHIAKYGSLHTETIVTDNYTRAKRFCREVDASAVMVNASTRFNDGGQLGLGAEIGISTSKLHAFGPMGVEELTATKFVVEGQGQIRS.

This sequence belongs to the gamma-glutamyl phosphate reductase family.

The protein localises to the cytoplasm. The catalysed reaction is L-glutamate 5-semialdehyde + phosphate + NADP(+) = L-glutamyl 5-phosphate + NADPH + H(+). It participates in amino-acid biosynthesis; L-proline biosynthesis; L-glutamate 5-semialdehyde from L-glutamate: step 2/2. Functionally, catalyzes the NADPH-dependent reduction of L-glutamate 5-phosphate into L-glutamate 5-semialdehyde and phosphate. The product spontaneously undergoes cyclization to form 1-pyrroline-5-carboxylate. The protein is Gamma-glutamyl phosphate reductase of Desulfatibacillum aliphaticivorans.